The sequence spans 115 residues: T-cell receptor gamma chain V region V108B (115 aa).

A signal peptide spans 1-18 (MLLLRWPTFCCLWVFGLG). Positions 19-115 (QLEQTELSVT…EATYYCAVWI (97 aa)) are v segment.

The protein is T-cell receptor gamma chain V region V108B (Tcrg-V1) of Mus musculus (Mouse).